We begin with the raw amino-acid sequence, 76 residues long: MDKVFNVGKLVDFQWKLGVSIASNHSSQLNTPFITVFVKVLDSNSEVTSHSFELTIPEFKNFAQQFKDMSNMIETL.

One can recognise a COMM domain in the interval 9 to 76; sequence KLVDFQWKLG…KDMSNMIETL (68 aa).

Belongs to the COMM domain-containing protein 6 family. In terms of assembly, component of the commander complex consisting of the CCC subcomplex and the retriever subcomplex. Component of the CCC subcomplex.

Scaffold protein in the commander complex that is essential for endosomal recycling of transmembrane cargos; the commander complex is composed of the CCC subcomplex and the retriever subcomplex. This Dictyostelium discoideum (Social amoeba) protein is COMM domain-containing protein 6 (commd6).